The primary structure comprises 484 residues: Chromosomal replication initiator protein DnaA (484 aa).

Residues 1 to 74 form a domain I, interacts with DnaA modulators region; it reads MEKSKNIWSL…ILTKNGYNNV (74 aa). The domain II stretch occupies residues 74-139; sequence VTIVFTNQPP…EEEPTNFKNP (66 aa). The interval 140–356 is domain III, AAA+ region; sequence FLKKRYTFEN…AAVTKLKAYI (217 aa). ATP-binding residues include glycine 184, glycine 186, lysine 187, and threonine 188. The interval 357–484 is domain IV, binds dsDNA; sequence DLDNIEIDID…TELMNKIKKN (128 aa).

This sequence belongs to the DnaA family. Oligomerizes as a right-handed, spiral filament on DNA at oriC.

It is found in the cytoplasm. In terms of biological role, plays an essential role in the initiation and regulation of chromosomal replication. ATP-DnaA binds to the origin of replication (oriC) to initiate formation of the DNA replication initiation complex once per cell cycle. Binds the DnaA box (a 9 base pair repeat at the origin) and separates the double-stranded (ds)DNA. Forms a right-handed helical filament on oriC DNA; dsDNA binds to the exterior of the filament while single-stranded (ss)DNA is stabiized in the filament's interior. The ATP-DnaA-oriC complex binds and stabilizes one strand of the AT-rich DNA unwinding element (DUE), permitting loading of DNA polymerase. After initiation quickly degrades to an ADP-DnaA complex that is not apt for DNA replication. Binds acidic phospholipids. This chain is Chromosomal replication initiator protein DnaA, found in Borrelia garinii subsp. bavariensis (strain ATCC BAA-2496 / DSM 23469 / PBi) (Borreliella bavariensis).